The chain runs to 335 residues: RNA polymerase sigma factor RpoS (335 aa).

Residues Asp-57–Ala-90 are sigma-70 factor domain-1. Residues Met-95–Thr-165 form a sigma-70 factor domain-2 region. Residues Asp-119–Glu-122 carry the Interaction with polymerase core subunit RpoC motif. A sigma-70 factor domain-3 region spans residues Glu-175–Ser-250. Positions Trp-263–Glu-316 are sigma-70 factor domain-4. The segment at residues Leu-289–Val-308 is a DNA-binding region (H-T-H motif).

Belongs to the sigma-70 factor family. RpoS subfamily. As to quaternary structure, interacts with the RNA polymerase core enzyme.

It is found in the cytoplasm. Its function is as follows. Sigma factors are initiation factors that promote the attachment of RNA polymerase to specific initiation sites and are then released. This sigma factor is the master transcriptional regulator of the stationary phase and the general stress response. May be required for the persistence of V.cholerae in aquatic habitats. This chain is RNA polymerase sigma factor RpoS, found in Vibrio cholerae serotype O1 (strain ATCC 39315 / El Tor Inaba N16961).